Consider the following 65-residue polypeptide: Large ribosomal subunit protein bL35 (65 aa).

The interval Met-1 to Gly-20 is disordered.

It belongs to the bacterial ribosomal protein bL35 family.

This Bacteroides thetaiotaomicron (strain ATCC 29148 / DSM 2079 / JCM 5827 / CCUG 10774 / NCTC 10582 / VPI-5482 / E50) protein is Large ribosomal subunit protein bL35.